The primary structure comprises 30 residues: Cyclotide mden-E (30 aa).

Positions Gly1–Asn30 form a cross-link, cyclopeptide (Gly-Asn). 3 cysteine pairs are disulfide-bonded: Cys4–Cys20, Cys8–Cys22, and Cys13–Cys27.

The protein belongs to the cyclotide family. Bracelet subfamily. This is a cyclic peptide.

Its function is as follows. Probably participates in a plant defense mechanism. The polypeptide is Cyclotide mden-E (Melicytus dentatus (Tree violet)).